The primary structure comprises 445 residues: Phosphoglucosamine mutase (445 aa).

Ser-102 acts as the Phosphoserine intermediate in catalysis. 4 residues coordinate Mg(2+): Ser-102, Asp-241, Asp-243, and Asp-245. The residue at position 102 (Ser-102) is a Phosphoserine.

Belongs to the phosphohexose mutase family. The cofactor is Mg(2+). Post-translationally, activated by phosphorylation.

The enzyme catalyses alpha-D-glucosamine 1-phosphate = D-glucosamine 6-phosphate. Catalyzes the conversion of glucosamine-6-phosphate to glucosamine-1-phosphate. The chain is Phosphoglucosamine mutase from Escherichia coli O157:H7.